A 482-amino-acid chain; its full sequence is Chromosome stability protein 9 (482 aa).

2 disordered regions span residues 239–263 (SSLR…VNKN) and 418–482 (SGLA…RRIR). Positions 240–249 (SLRNSSKNNN) are enriched in low complexity. Residues 250–263 (GTVTPSTSGRVNKN) show a composition bias toward polar residues. Residues 418-437 (SGLAFSSSSNSLQQSKLPKS) show a composition bias toward low complexity. Composition is skewed to polar residues over residues 440–453 (LKRS…TNTH) and 463–473 (RSSNTVLGSSK).

In terms of assembly, component of the synapsis initiation complex composed of at least ZIP2, ZIP3, MSH4 and MSH5. Also interacts with ZIP1, MRE11, RAD51 and RAD53.

It is found in the nucleus. The protein resides in the chromosome. In terms of biological role, component of the synapsis initiation complex (SIC) necessary for the synaptonemal complex assembly. Stabilizes the ZIP2 component to the chromosomes. The SIC complex loads onto chromosomes and nucleates ZIP1 polymerization, a molecular zipper that acts to bring homologous chromosomes in close apposition, which is required for meiotic crossover. May also be involved in double strand break repair. The protein is Chromosome stability protein 9 (CST9) of Saccharomyces cerevisiae (strain ATCC 204508 / S288c) (Baker's yeast).